A 65-amino-acid chain; its full sequence is Ferredoxin-1 (65 aa).

Positions 2-30 (AMKIDPELCTSCGDCEPVCPTNAIAPKKG) constitute a 4Fe-4S ferredoxin-type domain. [4Fe-4S] cluster contacts are provided by Cys10, Cys13, Cys16, Cys20, Cys39, Cys42, Cys51, and Cys55.

[4Fe-4S] cluster serves as cofactor.

Its function is as follows. Ferredoxins are iron-sulfur proteins that transfer electrons in a wide variety of metabolic reactions. This ferredoxin probably participates in nitrogen fixation. This is Ferredoxin-1 (fdxN) from Rhodobacter capsulatus (Rhodopseudomonas capsulata).